We begin with the raw amino-acid sequence, 222 residues long: Dihydrophenazinedicarboxylate synthase (222 aa).

Serine 18 is a substrate binding site. Residues 73–76 (RIVV) and 88–89 (ST) contribute to the FMN site. Histidine 90 provides a ligand contact to substrate. Residues 94–95 (QK) and glutamine 117 each bind FMN. Substrate contacts are provided by arginine 139 and serine 147. FMN is bound by residues 152-153 (QS) and arginine 205.

The protein belongs to the pyridoxamine 5'-phosphate oxidase family. Requires FMN as cofactor.

The catalysed reaction is (1R,6R)-1,4,5,5a,6,9-hexahydrophenazine-1,6-dicarboxylate + O2 = (1R,10aS)-1,4,10,10a-tetrahydrophenazine-1,6-dicarboxylate + H2O2. It catalyses the reaction (1R,10aS)-1,4,10,10a-tetrahydrophenazine-1,6-dicarboxylate + O2 = (5aS)-5,5a-dihydrophenazine-1,6-dicarboxylate + H2O2. It carries out the reaction (1R,10aS)-1,4,10,10a-tetrahydrophenazine-1-carboxylate + O2 = (10aS)-10,10a-dihydrophenazine-1-carboxylate + H2O2. The enzyme catalyses (1R)-1,4,5,10-tetrahydrophenazine-1-carboxylate + O2 = (10aS)-10,10a-dihydrophenazine-1-carboxylate + H2O2. It participates in antibiotic biosynthesis; phenazine biosynthesis. Functionally, involved in the biosynthesis of the antibiotic phenazine, a nitrogen-containing heterocyclic molecule having important roles in virulence, competition and biological control. Catalyzes several oxidations in the terminal steps of core phenazine biosynthesis. It oxidizes both hexahydrophenazine-1,6-dicarboxylic acid (HHPDC) and tetrahydrophenazine-1-carboxylic acid (THPCA) and thereby contributes to the generation of both phenazine-1,6-dicarboxylic acid (PDC) and phenazine-1-carboxylic acid (PCA). The protein is Dihydrophenazinedicarboxylate synthase of Pseudomonas chlororaphis (Pseudomonas aureofaciens).